A 1032-amino-acid polypeptide reads, in one-letter code: Unconventional myosin-Ih (1032 aa).

Positions 12–701 constitute a Myosin motor domain; the sequence is GVQDFVLLDA…TLFATEDAFE (690 aa). Residue 105 to 112 coordinates ATP; the sequence is GESGAGKT. At S365 the chain carries Phosphoserine. The segment at 578-600 is actin-binding; that stretch reads LSSLLETLISKEPSYIRCIKPND. IQ domains follow at residues 704-726 and 727-756; these read KHQL…EYVK and KRQA…AVRI. The TH1 domain occupies 855–1029; sequence KDGYTESLNQ…NGQLTVVSVR (175 aa).

This sequence belongs to the TRAFAC class myosin-kinesin ATPase superfamily. Myosin family.

Functionally, myosins are actin-based motor molecules with ATPase activity. Unconventional myosins serve in intracellular movements. Their highly divergent tails are presumed to bind to membranous compartments, which would be moved relative to actin filaments. The polypeptide is Unconventional myosin-Ih (MYO1H) (Homo sapiens (Human)).